Reading from the N-terminus, the 263-residue chain is Phosphatidylglycerol--prolipoprotein diacylglyceryl transferase (263 aa).

Transmembrane regions (helical) follow at residues 10 to 30 (VAITLGPLQFRWYGLMYLFGF), 56 to 76 (MVTYVILGVVLGGRIGYILFY), 91 to 111 (IWNGGMSFHGGLLGVVFAMWL), and 117 to 137 (GLGFMDVSDFVAPLIPPGLFF). Arginine 139 is an a 1,2-diacyl-sn-glycero-3-phospho-(1'-sn-glycerol) binding site. A run of 3 helical transmembrane segments spans residues 171–191 (PSQLYECALEGVILFLALWVF), 199–219 (GHVSGLFALLYGVFRFTVEFV), and 231–251 (FGWLTMGQVLCLPLIMLGLWL).

Belongs to the Lgt family.

Its subcellular location is the cell inner membrane. The enzyme catalyses L-cysteinyl-[prolipoprotein] + a 1,2-diacyl-sn-glycero-3-phospho-(1'-sn-glycerol) = an S-1,2-diacyl-sn-glyceryl-L-cysteinyl-[prolipoprotein] + sn-glycerol 1-phosphate + H(+). It participates in protein modification; lipoprotein biosynthesis (diacylglyceryl transfer). Catalyzes the transfer of the diacylglyceryl group from phosphatidylglycerol to the sulfhydryl group of the N-terminal cysteine of a prolipoprotein, the first step in the formation of mature lipoproteins. This is Phosphatidylglycerol--prolipoprotein diacylglyceryl transferase from Nitratidesulfovibrio vulgaris (strain ATCC 29579 / DSM 644 / CCUG 34227 / NCIMB 8303 / VKM B-1760 / Hildenborough) (Desulfovibrio vulgaris).